A 397-amino-acid polypeptide reads, in one-letter code: Riboflavin biosynthesis protein RibBA (397 aa).

Residues 1–199 (MFHRIEEALE…IEDLIAYRRH (199 aa)) form a DHBP synthase region. Residues 26–27 (RE), aspartate 31, 138–142 (RAGHT), and glutamate 162 each bind D-ribulose 5-phosphate. Glutamate 27 provides a ligand contact to Mg(2+). Position 141 (histidine 141) interacts with Mg(2+). A GTP cyclohydrolase II region spans residues 200–397 (HETFVTKEVE…VTKLGHLLNL (198 aa)). 250–254 (RVHSE) contacts GTP. The Zn(2+) site is built by cysteine 255, cysteine 266, and cysteine 268. GTP contacts are provided by residues glutamine 271, 293–295 (EGR), and threonine 315. The active-site Proton acceptor; for GTP cyclohydrolase activity is the aspartate 327. Arginine 329 (nucleophile; for GTP cyclohydrolase activity) is an active-site residue. Residues threonine 350 and lysine 355 each coordinate GTP.

The protein in the N-terminal section; belongs to the DHBP synthase family. This sequence in the C-terminal section; belongs to the GTP cyclohydrolase II family. It depends on Mg(2+) as a cofactor. The cofactor is Mn(2+). Zn(2+) serves as cofactor.

It catalyses the reaction D-ribulose 5-phosphate = (2S)-2-hydroxy-3-oxobutyl phosphate + formate + H(+). The enzyme catalyses GTP + 4 H2O = 2,5-diamino-6-hydroxy-4-(5-phosphoribosylamino)-pyrimidine + formate + 2 phosphate + 3 H(+). The protein operates within cofactor biosynthesis; riboflavin biosynthesis; 2-hydroxy-3-oxobutyl phosphate from D-ribulose 5-phosphate: step 1/1. It functions in the pathway cofactor biosynthesis; riboflavin biosynthesis; 5-amino-6-(D-ribitylamino)uracil from GTP: step 1/4. In terms of biological role, catalyzes the conversion of D-ribulose 5-phosphate to formate and 3,4-dihydroxy-2-butanone 4-phosphate. Functionally, catalyzes the conversion of GTP to 2,5-diamino-6-ribosylamino-4(3H)-pyrimidinone 5'-phosphate (DARP), formate and pyrophosphate. The polypeptide is Riboflavin biosynthesis protein RibBA (Bacillus cytotoxicus (strain DSM 22905 / CIP 110041 / 391-98 / NVH 391-98)).